Consider the following 622-residue polypeptide: Phosphatidylinositol 4-kinase gamma 6 (622 aa).

The 58-residue stretch at 38-95 folds into the Ubiquitin-like; degenerate domain; sequence RRVFVQTDTGCVLGVELDRNDNVHTVKKRLQIAFNFPTEESSLTFGDMVLKNDLSAVR. One can recognise a PI3K/PI4K catalytic domain in the interval 158–459; that stretch reads GVEPIPVNGG…LTTEQDVLSP (302 aa). The G-loop stretch occupies residues 164–170; that stretch reads VNGGLGG. Residues 165–171, lysine 186, and 277–280 each bind ATP; these read NGGLGGA and QKFV. The tract at residues 310–318 is catalytic loop; it reads LNTDRHGGN. An activation loop region spans residues 339–365; that stretch reads PIDHGLCLPETLEDPYFEWIHWPQASI. Aspartate 341 contacts ATP. A Phosphoserine modification is found at serine 565.

It belongs to the PI3/PI4-kinase family. Type II PI4K subfamily.

It carries out the reaction a 1,2-diacyl-sn-glycero-3-phospho-(1D-myo-inositol) + ATP = a 1,2-diacyl-sn-glycero-3-phospho-(1D-myo-inositol 4-phosphate) + ADP + H(+). Functionally, the phosphorylation of phosphatidylinositol (PI) to PI4P is the first committed step in the generation of phosphatidylinositol 4,5-bisphosphate (PIP2), a precursor of the second messenger inositol 1,4,5-trisphosphate (InsP3). This Arabidopsis thaliana (Mouse-ear cress) protein is Phosphatidylinositol 4-kinase gamma 6 (PI4KG6).